Here is a 359-residue protein sequence, read N- to C-terminus: Mineralocorticoid receptor (359 aa).

A DNA-binding region (nuclear receptor) is located at residues 1-49; the sequence is FKRAVEGQHNYLCAGRNDCIIDKIRRKNCPACRVRKCLQAGMNLGARKS. Residues Cys13, Cys19, Cys29, and Cys32 each contribute to the Zn(2+) site. Residues 13 to 37 form an NR C4-type zinc finger; the sequence is CAGRNDCIIDKIRRKNCPACRVRKC. The interval 48–96 is disordered; sequence KSKKPGKLKGVNEDSTPTKEGGQTCPGSGGGYLSSGEKELSTSPTNALV. The interval 50 to 107 is hinge; that stretch reads KKPGKLKGVNEDSTPTKEGGQTCPGSGGGYLSSGEKELSTSPTNALVPHGPGGGLVTP. One can recognise an NR LBD domain in the interval 108–339; the sequence is YLPPSICSVL…EFPEMLVEII (232 aa). Asn145 and Gln151 together coordinate 21-hydroxyprogesterone. The aldosterone site is built by Asn145 and Gln151. 2 residues coordinate progesterone: Asn145 and Gln151. Positions 157–160 are important for coactivator binding; it reads KWAK. Arg192 and Thr320 together coordinate 21-hydroxyprogesterone. The aldosterone site is built by Arg192 and Thr320. Progesterone contacts are provided by Arg192 and Thr320.

It belongs to the nuclear hormone receptor family. NR3 subfamily.

The protein localises to the cytoplasm. It is found in the nucleus. Functionally, receptor for both mineralocorticoids (MC) such as cortisol. Binds to mineralocorticoid response elements (MRE) and transactivates target genes. The effect of MC is to increase ion and water transport and thus raise extracellular fluid volume and blood pressure and lower potassium levels. This is Mineralocorticoid receptor (nr3c2) from Oncorhynchus mykiss (Rainbow trout).